The sequence spans 332 residues: Ketol-acid reductoisomerase (NADP(+)) (332 aa).

A KARI N-terminal Rossmann domain is found at 4–184 (ARMYYDEDAD…GGTRAGILET (181 aa)). NADP(+) is bound by residues 27–30 (YGSQ), serine 53, serine 55, and 85–88 (DEVQ). The active site involves histidine 110. Glycine 136 contacts NADP(+). The KARI C-terminal knotted domain maps to 185 to 330 (TFREEAETDL…ADLRKMMSWL (146 aa)). 4 residues coordinate Mg(2+): aspartate 193, glutamate 197, glutamate 229, and glutamate 233. Serine 254 is a binding site for substrate.

Belongs to the ketol-acid reductoisomerase family. Mg(2+) is required as a cofactor.

It carries out the reaction (2R)-2,3-dihydroxy-3-methylbutanoate + NADP(+) = (2S)-2-acetolactate + NADPH + H(+). The catalysed reaction is (2R,3R)-2,3-dihydroxy-3-methylpentanoate + NADP(+) = (S)-2-ethyl-2-hydroxy-3-oxobutanoate + NADPH + H(+). Its pathway is amino-acid biosynthesis; L-isoleucine biosynthesis; L-isoleucine from 2-oxobutanoate: step 2/4. It participates in amino-acid biosynthesis; L-valine biosynthesis; L-valine from pyruvate: step 2/4. Functionally, involved in the biosynthesis of branched-chain amino acids (BCAA). Catalyzes an alkyl-migration followed by a ketol-acid reduction of (S)-2-acetolactate (S2AL) to yield (R)-2,3-dihydroxy-isovalerate. In the isomerase reaction, S2AL is rearranged via a Mg-dependent methyl migration to produce 3-hydroxy-3-methyl-2-ketobutyrate (HMKB). In the reductase reaction, this 2-ketoacid undergoes a metal-dependent reduction by NADPH to yield (R)-2,3-dihydroxy-isovalerate. The chain is Ketol-acid reductoisomerase (NADP(+)) from Gloeobacter violaceus (strain ATCC 29082 / PCC 7421).